Consider the following 648-residue polypeptide: Protein associated with UVRAG as autophagy enhancer (648 aa).

2 stretches are compositionally biased toward polar residues: residues Q131–S146 and P157–R173. Residues Q131–R173 form a disordered region. A Phosphoserine modification is found at S144. An interaction with UVRAG region spans residues E183–E222. Residues K469, K509, K519, K559, and K619 each carry the N6-acetyllysine modification.

In terms of assembly, interacts with UVRAG; the interaction is direct and promotes association with the PI3K/PI3KC3 and HOPS complexes. Interacts with STX17. Phosphorylated by MTOR at Ser-144 under nutrient-rich conditions. Phosphorylation prevents acetylation by KAT5/TIP60 and impairs RUBCNL/PACER function and autophagosome maturation. Under autophagy induction, Phosphorylation by MTOR is repressed, enabling acetylation by KAT5/TIP60. Post-translationally, acetylated by KAT5/TIP60 under autophagy induction, promoting autophagosome maturation and lipid metabolism. Acetylation is prevented by phosphorylation by MTOR. Lys-469 and Lys-559 constitute the key sites for tuning function in autophagy.

The protein localises to the cytoplasmic vesicle. Its subcellular location is the autophagosome membrane. Its function is as follows. Regulator of autophagy that promotes autophagosome maturation by facilitating the biogenesis of phosphatidylinositol 3-phosphate (PtdIns(3)P) in late steps of autophagy. Acts by antagonizing RUBCN, thereby stimulating phosphatidylinositol 3-kinase activity of the PI3K/PI3KC3 complex. Following anchorage to the autophagosomal SNARE STX17, promotes the recruitment of PI3K/PI3KC3 and HOPS complexes to the autophagosome to regulate the fusion specificity of autophagosomes with late endosomes/lysosomes. Binds phosphoinositides phosphatidylinositol 3-phosphate (PtdIns(3)P), 4-phosphate (PtdIns(4)P) and 5-phosphate (PtdIns(5)P). In addition to its role in autophagy, acts as a regulator of lipid and glycogen homeostasis. May act as a tumor suppressor. This Mus musculus (Mouse) protein is Protein associated with UVRAG as autophagy enhancer.